We begin with the raw amino-acid sequence, 2283 residues long: DNA polymerase epsilon catalytic subunit A (2283 aa).

The segment at 1–32 (MVLRNSGRRHPEPGADGEGSRDDGPSSSVSAL) is disordered. The segment covering 9–24 (RHPEPGADGEGSRDDG) has biased composition (basic and acidic residues). Residues Ser-1184, Ser-1296, and Ser-1316 each carry the phosphoserine modification. 2 disordered regions span residues 1935-1968 (GQVK…GESE) and 2014-2041 (HSAP…TGSL). The segment covering 1936 to 1946 (QVKEQDSQARE) has biased composition (basic and acidic residues). Over residues 1947–1968 (ETDEEEEDKEKDEEEEGMGESE) the composition is skewed to acidic residues. Polar residues predominate over residues 2028-2037 (SQFSQESEGA). 4 residues coordinate Zn(2+): Cys-2155, Cys-2158, Cys-2184, and Cys-2187. A CysA-type zinc finger spans residues 2155–2187 (CHSCNFCRDLDLCKDSSFSQDGAILPQWLCSNC). [4Fe-4S] cluster is bound by residues Cys-2218, Cys-2221, Cys-2233, and Cys-2235. The CysB motif motif lies at 2218–2235 (CLKCRGMKETHMPVYCSC).

Belongs to the DNA polymerase type-B family. In terms of assembly, component of the DNA polymerase epsilon complex consisting of four subunits: the catalytic subunit POLE and the accessory subunits POLE2, POLE3 and POLE4. Interacts with RAD17 and TOPBP1. [4Fe-4S] cluster serves as cofactor.

The protein resides in the nucleus. It carries out the reaction DNA(n) + a 2'-deoxyribonucleoside 5'-triphosphate = DNA(n+1) + diphosphate. Functionally, catalytic component of the DNA polymerase epsilon complex. Participates in chromosomal DNA replication. Required during synthesis of the leading DNA strands at the replication fork and binds at/or near replication origins and moves along DNA with the replication fork. Has 3'-5' proofreading exonuclease activity that corrects errors arising during DNA replication. It is also involved in DNA synthesis during DNA repair. In Mus musculus (Mouse), this protein is DNA polymerase epsilon catalytic subunit A (Pole).